Consider the following 299-residue polypeptide: 4-hydroxybenzoate octaprenyltransferase (299 aa).

The next 8 membrane-spanning stretches (helical) occupy residues 33-53 (VGFLLLLWPTWWALWLAADGV), 56-76 (WWTLCVFTTGIWLTRSAGCVI), 107-127 (LLMFATLMLIAFGLVLTMNQL), 151-171 (LPQVYLGLAFGWGIPMAFAAI), 180-200 (WLLYIANILWTTAYDTWYAMV), 213-233 (IAILFAELDLVVQGVLYTLML), 247-267 (HTYWISLISAVALIGYQFIIA), and 278-298 (AFMHNNWVGMTIFAGIALATT).

The protein belongs to the UbiA prenyltransferase family. It depends on Mg(2+) as a cofactor.

It is found in the cell inner membrane. The enzyme catalyses all-trans-octaprenyl diphosphate + 4-hydroxybenzoate = 4-hydroxy-3-(all-trans-octaprenyl)benzoate + diphosphate. It functions in the pathway cofactor biosynthesis; ubiquinone biosynthesis. In terms of biological role, catalyzes the prenylation of para-hydroxybenzoate (PHB) with an all-trans polyprenyl group. Mediates the second step in the final reaction sequence of ubiquinone-8 (UQ-8) biosynthesis, which is the condensation of the polyisoprenoid side chain with PHB, generating the first membrane-bound Q intermediate 3-octaprenyl-4-hydroxybenzoate. The chain is 4-hydroxybenzoate octaprenyltransferase from Xylella fastidiosa (strain M12).